A 611-amino-acid polypeptide reads, in one-letter code: Alpha-1,2-mannosyltransferase ALG9 (611 aa).

The span at 1 to 10 (MASRRARQRL) shows a compositional bias: basic residues. The interval 1-51 (MASRRARQRLKGGGGGGGGGGDAGPAAEKLEQLGSREAGAEPRPESGNKAG) is disordered. The Lumenal segment spans residues 1–135 (MASRRARQRL…FHARILQTNK (135 aa)). Gly residues predominate over residues 11–23 (KGGGGGGGGGGDA). An N-linked (GlcNAc...) asparagine glycan is attached at asparagine 77. A helical transmembrane segment spans residues 136-156 (ILVFYFLRCLLAFVSCVCELY). At 157 to 171 (FYKAVCKKFGLHVSR) the chain is on the cytoplasmic side. A helical transmembrane segment spans residues 172 to 192 (MMLAFLVLSTGMFCSSSAFLP). The Lumenal portion of the chain corresponds to 193 to 213 (SSFCMYTTLIAMTGWYMDKTP). Residues 214 to 234 (IAVLGVAAGAILGWPFSAALG) traverse the membrane as a helical segment. Residues 235-249 (LPIAFDLLARKHRWK) lie on the Cytoplasmic side of the membrane. A helical membrane pass occupies residues 250 to 270 (SFLLWSLVALALFLVPVVVID). At 271-310 (SYYYGKLVVAPLNIVLYNVFTSHGPDLYGTEPWYFYLING) the chain is on the lumenal side. The helical transmembrane segment at 311-331 (FLNFNVAFALALLVLPLTFLM) threads the bilayer. Residues 332–342 (EYLLQRFHVQN) lie on the Cytoplasmic side of the membrane. Residues 343 to 363 (LGHPYWLTLAPMYIWFIIFFI) traverse the membrane as a helical segment. The Lumenal segment spans residues 364–370 (QPHKEER). Residues 371-391 (FLFPVYPLICLCGAVALSALQ) form a helical membrane-spanning segment. The Cytoplasmic portion of the chain corresponds to 392 to 405 (KCYHFVFQRYRLEH). Residues 406 to 426 (YTVTSNWLALGTVFLFGLLSF) traverse the membrane as a helical segment. Residues 427-611 (SRSVALFRGY…AKPSRKKSGG (185 aa)) lie on the Lumenal side of the membrane. Residues asparagine 550 and asparagine 593 are each glycosylated (N-linked (GlcNAc...) asparagine).

It belongs to the glycosyltransferase 22 family.

It is found in the endoplasmic reticulum membrane. The enzyme catalyses an alpha-D-Man-(1-&gt;2)-alpha-D-Man-(1-&gt;2)-alpha-D-Man-(1-&gt;3)-[alpha-D-Man-(1-&gt;3)-alpha-D-Man-(1-&gt;6)]-beta-D-Man-(1-&gt;4)-beta-D-GlcNAc-(1-&gt;4)-alpha-D-GlcNAc-diphospho-di-trans,poly-cis-dolichol + a di-trans,poly-cis-dolichyl beta-D-mannosyl phosphate = an alpha-D-Man-(1-&gt;2)-alpha-D-Man-(1-&gt;2)-alpha-D-Man-(1-&gt;3)-[alpha-D-Man-(1-&gt;2)-alpha-D-Man-(1-&gt;3)-alpha-D-Man-(1-&gt;6)]-beta-D-Man-(1-&gt;4)-beta-D-GlcNAc-(1-&gt;4)-alpha-D-GlcNAc-diphospho-di-trans,poly-cis-dolichol + a di-trans,poly-cis-dolichyl phosphate + H(+). It carries out the reaction an alpha-D-Man-(1-&gt;2)-alpha-D-Man-(1-&gt;2)-alpha-D-Man-(1-&gt;3)-[alpha-D-Man-(1-&gt;2)-alpha-D-Man-(1-&gt;3)-[alpha-D-Man-(1-&gt;6)]-alpha-D-Man-(1-&gt;6)]-beta-D-Man-(1-&gt;4)-beta-D-GlcNAc-(1-&gt;4)-alpha-D-GlcNAc-diphospho-di-trans,poly-cis-dolichol + a di-trans,poly-cis-dolichyl beta-D-mannosyl phosphate = an alpha-D-Man-(1-&gt;2)-alpha-D-Man-(1-&gt;2)-alpha-D-Man-(1-&gt;3)-[alpha-D-Man-(1-&gt;2)-alpha-D-Man-(1-&gt;3)-[alpha-D-Man-(1-&gt;2)-alpha-D-Man-(1-&gt;6)]-alpha-D-Man-(1-&gt;6)]-beta-D-Man-(1-&gt;4)-beta-D-GlcNAc-(1-&gt;4)-alpha-D-GlcNAc-diphospho-di-trans,poly-cis-dolichol + a di-trans,poly-cis-dolichyl phosphate + H(+). It functions in the pathway protein modification; protein glycosylation. Its function is as follows. Mannosyltransferase that operates in the biosynthetic pathway of dolichol-linked oligosaccharides, the glycan precursors employed in protein asparagine (N)-glycosylation. The assembly of dolichol-linked oligosaccharides begins on the cytosolic side of the endoplasmic reticulum membrane and finishes in its lumen. The sequential addition of sugars to dolichol pyrophosphate produces dolichol-linked oligosaccharides containing fourteen sugars, including two GlcNAcs, nine mannoses and three glucoses. Once assembled, the oligosaccharide is transferred from the lipid to nascent proteins by oligosaccharyltransferases. In the lumen of the endoplasmic reticulum, catalyzes the addition of the seventh and ninth alpha-1,2-linked mannose residues to Man(6)GlcNAc(2)-PP-dolichol and Man(8)GlcNAc(2)-PP-dolichol respectively. This is Alpha-1,2-mannosyltransferase ALG9 from Mus musculus (Mouse).